A 229-amino-acid polypeptide reads, in one-letter code: MSRVLSRDQSREVDQIAIEQFHLPGVVLMENAGRNCAELIRQLSPAGQILILAGKGNNGGDGFVIARHLHNAGLNVKLLVFANPEDYSGEAESNWRIITAMQLPAVSNATAADLSQALAELPESSLIVDALLGTGIRGQVRAPFDEIITAVNAYRDDHPHAIVFAVDVPSGLDCDTGLPCGVAIKADQTATFVMLKQGFVTGDGPEYTGTTHVIDIGIPPALLDRLTAE.

Positions 10 to 224 (SREVDQIAIE…DIGIPPALLD (215 aa)) constitute a YjeF N-terminal domain. 57–61 (NNGGD) contacts (6S)-NADPHX. K(+) is bound by residues N58 and D129. Residues 133 to 139 (GTGIRGQ) and D167 each bind (6S)-NADPHX. Position 170 (S170) interacts with K(+).

The protein belongs to the NnrE/AIBP family. It depends on K(+) as a cofactor.

It catalyses the reaction (6R)-NADHX = (6S)-NADHX. It carries out the reaction (6R)-NADPHX = (6S)-NADPHX. In terms of biological role, catalyzes the epimerization of the S- and R-forms of NAD(P)HX, a damaged form of NAD(P)H that is a result of enzymatic or heat-dependent hydration. This is a prerequisite for the S-specific NAD(P)H-hydrate dehydratase to allow the repair of both epimers of NAD(P)HX. In Rubinisphaera brasiliensis (strain ATCC 49424 / DSM 5305 / JCM 21570 / IAM 15109 / NBRC 103401 / IFAM 1448) (Planctomyces brasiliensis), this protein is NAD(P)H-hydrate epimerase.